The following is a 984-amino-acid chain: uncharacterized protein (984 aa).

Residues 941–984 form a disordered region; it reads FGPSGPGPNQGPGDDYNNFKSTKYPRNGYNKYQPNNRIHSRNRY.

It localises to the virion. This is an uncharacterized protein from Acanthamoeba polyphaga (Amoeba).